A 457-amino-acid chain; its full sequence is Methylphosphonate synthase (457 aa).

The HTH cro/C1-type 1 domain occupies 23–74; sequence ILNDIKRRPEDAANELGVSIEEINSIISGKQKISPSLIEKAVNIWPVNERDF. The segment at residues 32–50 is a DNA-binding region (H-T-H motif); sequence EDAANELGVSIEEINSIIS. 2 residues coordinate Fe cation: His-148 and His-190. The HTH cro/C1-type 2 domain maps to 247–301; that stretch reads LEYYFELSNLTKEKFAKRTNFSMETLADFFTKKKLPTFDELKIIAKALNVNSRDL. The segment at residues 258–277 is a DNA-binding region (H-T-H motif); sequence KEKFAKRTNFSMETLADFFT.

The protein belongs to the non-heme iron-dependent dioxygenase family. Fe(2+) serves as cofactor.

It carries out the reaction 2-hydroxyethylphosphonate + O2 = methylphosphonate + hydrogencarbonate + H(+). Its pathway is phosphorus metabolism; phosphonate biosynthesis. Catalyzes the conversion of 2-hydroxyethylphosphonate into methylphosphonate in the methylphosphonate biosynthesis pathway. The sequence is that of Methylphosphonate synthase (mpnS) from Nitrosopumilus maritimus (strain SCM1).